We begin with the raw amino-acid sequence, 485 residues long: Heat stress transcription factor A-1d (485 aa).

Disordered regions lie at residues 1-34 (MDVS…SSNA) and 126-149 (RRKP…QNSS). A DNA-binding region spans residues 35-129 (PPPFLSKTYD…LLQSITRRKP (95 aa)). Positions 136-146 (GHQRSQHSNGQ) are enriched in low complexity. Residues 152-218 (ACVEVGKFGL…QLMSFLAKAV (67 aa)) are hydrophobic repeat HR-A/B. Disordered stretches follow at residues 229-269 (QQQN…GQIV) and 436-461 (PVPD…DKTK). A Bipartite nuclear localization signal motif is present at residues 238 to 252 (NRRISDTSKKRRFKR). The span at 441–455 (MDSTPVDNETEQEQN) shows a compositional bias: polar residues. Positions 472-480 (LLSPETLDL) match the Nuclear export signal motif.

Belongs to the HSF family. Class A subfamily. As to quaternary structure, homotrimer. Interacts with HSP90-2. Exhibits temperature-dependent phosphorylation.

Its subcellular location is the cytoplasm. It is found in the nucleus. Functionally, transcriptional regulator that specifically binds DNA sequence 5'-AGAAnnTTCT-3' known as heat shock promoter elements (HSE). The sequence is that of Heat stress transcription factor A-1d (HSFA1D) from Arabidopsis thaliana (Mouse-ear cress).